The sequence spans 186 residues: Imidazoleglycerol-phosphate dehydratase (186 aa).

Belongs to the imidazoleglycerol-phosphate dehydratase family.

Its subcellular location is the cytoplasm. It catalyses the reaction D-erythro-1-(imidazol-4-yl)glycerol 3-phosphate = 3-(imidazol-4-yl)-2-oxopropyl phosphate + H2O. It participates in amino-acid biosynthesis; L-histidine biosynthesis; L-histidine from 5-phospho-alpha-D-ribose 1-diphosphate: step 6/9. This Dictyoglomus thermophilum (strain ATCC 35947 / DSM 3960 / H-6-12) protein is Imidazoleglycerol-phosphate dehydratase.